A 95-amino-acid polypeptide reads, in one-letter code: Alpha-defensin 20 (95 aa).

A signal peptide spans 1-19 (MKTLVLLSALVLLAFQVQA). The propeptide occupies 20-58 (DPIQNTDEETNTEEQPGEEDQAVSVSFGDPEGSALHEKS). Positions 22–57 (IQNTDEETNTEEQPGEEDQAVSVSFGDPEGSALHEK) are disordered. Residues 25-40 (TDEETNTEEQPGEEDQ) show a composition bias toward acidic residues. 3 disulfide bridges follow: Cys64/Cys89, Cys66/Cys81, and Cys71/Cys88.

The protein belongs to the alpha-defensin family.

It localises to the secreted. In terms of biological role, may have microbicidal activities. The sequence is that of Alpha-defensin 20 (Defa20) from Mus musculus (Mouse).